The sequence spans 309 residues: Protein EXORDIUM-like 1 (309 aa).

Residues 1 to 23 (MASFVMGYFLLFAVAFMCLDART) form the signal peptide.

The protein belongs to the EXORDIUM family.

Its subcellular location is the secreted. It localises to the extracellular space. It is found in the apoplast. Functionally, may play a role in a brassinosteroid-dependent regulatory pathway that controls growth and development under low carbon and energy availability. The polypeptide is Protein EXORDIUM-like 1 (EXL1) (Arabidopsis thaliana (Mouse-ear cress)).